Here is a 93-residue protein sequence, read N- to C-terminus: Small ribosomal subunit protein uS19 (93 aa).

This sequence belongs to the universal ribosomal protein uS19 family.

Functionally, protein S19 forms a complex with S13 that binds strongly to the 16S ribosomal RNA. In Campylobacter concisus (strain 13826), this protein is Small ribosomal subunit protein uS19.